The following is a 92-amino-acid chain: UPF0223 protein SUB0967 (92 aa).

The protein belongs to the UPF0223 family.

This chain is UPF0223 protein SUB0967, found in Streptococcus uberis (strain ATCC BAA-854 / 0140J).